The primary structure comprises 121 residues: Small ribosomal subunit protein uS13 (121 aa).

A disordered region spans residues 97–121 (VRGQRTRTNARTRRGARKTVAGKKK). Positions 100–121 (QRTRTNARTRRGARKTVAGKKK) are enriched in basic residues.

It belongs to the universal ribosomal protein uS13 family. As to quaternary structure, part of the 30S ribosomal subunit. Forms a loose heterodimer with protein S19. Forms two bridges to the 50S subunit in the 70S ribosome.

Its function is as follows. Located at the top of the head of the 30S subunit, it contacts several helices of the 16S rRNA. In the 70S ribosome it contacts the 23S rRNA (bridge B1a) and protein L5 of the 50S subunit (bridge B1b), connecting the 2 subunits; these bridges are implicated in subunit movement. Contacts the tRNAs in the A and P-sites. This is Small ribosomal subunit protein uS13 from Synechococcus sp. (strain CC9311).